A 199-amino-acid polypeptide reads, in one-letter code: GTP-binding protein Di-Ras2 (199 aa).

GTP contacts are provided by residues 14–21 (GAGGVGKS), 33–39 (RESYIPT), 61–65 (DTTGS), and 121–124 (NKCD). Ser-35 carries the post-translational modification Phosphoserine. The short motif at 36 to 44 (YIPTVEDTY) is the Effector region element. Position 126 is a phosphoserine (Ser-126). 152–153 (AK) provides a ligand contact to GTP. A Cysteine methyl ester modification is found at Cys-196. Cys-196 carries the S-geranylgeranyl cysteine lipid modification. A propeptide spans 197 to 199 (VVM) (removed in mature form).

It belongs to the small GTPase superfamily. Di-Ras family. Ubiquitinated by the ECS(ASB11) complex via 'Lys-11'-linked ubiquitin chains, leading to its degradation by the proteasome.

Its subcellular location is the cell membrane. The catalysed reaction is GTP + H2O = GDP + phosphate + H(+). In terms of biological role, displays low GTPase activity and exists predominantly in the GTP-bound form. The protein is GTP-binding protein Di-Ras2 (Diras2) of Mus musculus (Mouse).